Here is a 353-residue protein sequence, read N- to C-terminus: MNGTEGPYFYIPMVNTTGIVRSPYEYPQYYLVNPAAYAALGAYMFLLILIGFPVNFLTLYVTIEHKKLRTPLNYILLNLAVADLFMVFGGFTTTMYTSMHGYFVLGRLGCNLEGFFATLGGEIALWSLVVLAVERWMVVCKPISNFRFGEDHAIMGLAFTWVMAAACAVPPLVGWSRYIPEGMQCSCGIDYYTRAEGFNNESFVIYMFVCHFLIPLVVVFFCYGRLLCAVKEAAAAQQESETTQRAEREVSRMVVIMVVAFLVCWCPYAGVAWYIFTHQGSEFGPLFMTFPAFFAKSSSIYNPMIYICMNKQFRQCMITTLCCGKNPFEEEEGASTTSKTEASSVSSSSVSPA.

At 1 to 36 the chain is on the extracellular side; it reads MNGTEGPYFYIPMVNTTGIVRSPYEYPQYYLVNPAA. N-linked (GlcNAc...) asparagine glycans are attached at residues asparagine 2 and asparagine 15. Residues 37–61 traverse the membrane as a helical segment; the sequence is YAALGAYMFLLILIGFPVNFLTLYV. Residues 62-73 are Cytoplasmic-facing; sequence TIEHKKLRTPLN. Residues 74–96 form a helical membrane-spanning segment; it reads YILLNLAVADLFMVFGGFTTTMY. Over 97–110 the chain is Extracellular; it reads TSMHGYFVLGRLGC. Cysteine 110 and cysteine 187 are disulfide-bonded. Residues 111 to 133 form a helical membrane-spanning segment; it reads NLEGFFATLGGEIALWSLVVLAV. Residues 134-136 carry the 'Ionic lock' involved in activated form stabilization motif; it reads ERW. The Cytoplasmic segment spans residues 134–152; sequence ERWMVVCKPISNFRFGEDH. Residues 153–173 form a helical membrane-spanning segment; it reads AIMGLAFTWVMAAACAVPPLV. At 174-202 the chain is on the extracellular side; sequence GWSRYIPEGMQCSCGIDYYTRAEGFNNES. Residue asparagine 200 is glycosylated (N-linked (GlcNAc...) asparagine). Residues 203–224 traverse the membrane as a helical segment; it reads FVIYMFVCHFLIPLVVVFFCYG. Residues 225–252 lie on the Cytoplasmic side of the membrane; the sequence is RLLCAVKEAAAAQQESETTQRAEREVSR. A helical transmembrane segment spans residues 253–274; that stretch reads MVVIMVVAFLVCWCPYAGVAWY. The Extracellular portion of the chain corresponds to 275–286; it reads IFTHQGSEFGPL. The helical transmembrane segment at 287-308 threads the bilayer; it reads FMTFPAFFAKSSSIYNPMIYIC. Lysine 296 carries the post-translational modification N6-(retinylidene)lysine. The Cytoplasmic portion of the chain corresponds to 309 to 353; it reads MNKQFRQCMITTLCCGKNPFEEEEGASTTSKTEASSVSSSSVSPA. 2 S-palmitoyl cysteine lipidation sites follow: cysteine 322 and cysteine 323. The interval 329–353 is disordered; that stretch reads EEEEGASTTSKTEASSVSSSSVSPA. Low complexity predominate over residues 334–353; sequence ASTTSKTEASSVSSSSVSPA.

Belongs to the G-protein coupled receptor 1 family. Opsin subfamily. Post-translationally, phosphorylated on some or all of the serine and threonine residues present in the C-terminal region. Contains one covalently linked retinal chromophore.

The protein localises to the membrane. It is found in the cell projection. It localises to the cilium. Its subcellular location is the photoreceptor outer segment. Functionally, photoreceptor required for image-forming vision at low light intensity. While most salt water fish species use retinal as chromophore, most freshwater fish use 3-dehydroretinal, or a mixture of retinal and 3-dehydroretinal. Light-induced isomerization of 11-cis to all-trans retinal triggers a conformational change that activates signaling via G-proteins. Subsequent receptor phosphorylation mediates displacement of the bound G-protein alpha subunit by arrestin and terminates signaling. This Chelon auratus (Golden grey mullet) protein is Rhodopsin (rho).